A 363-amino-acid polypeptide reads, in one-letter code: Uptake hydrogenase small subunit (363 aa).

The tat-type signal signal peptide spans 1-43 (MIETFYEVMRRQGISRRSFLKYCSLTATSLGLSPVFVPKIVHA). Residues C60, C63, C158, C192, H230, C233, C258, and C264 each contribute to the [4Fe-4S] cluster site. [3Fe-4S] cluster is bound by residues C273, C292, and C295.

The protein belongs to the [NiFe]/[NiFeSe] hydrogenase small subunit family. As to quaternary structure, heterodimer of a large and a small subunit. The cofactor is [4Fe-4S] cluster. [3Fe-4S] cluster serves as cofactor. In terms of processing, predicted to be exported by the Tat system. The position of the signal peptide cleavage has not been experimentally proven.

Its subcellular location is the cell membrane. The catalysed reaction is H2 + A = AH2. This enzyme recycles the H(2) produced by nitrogenase to increase the production of ATP and to protect nitrogenase against inhibition or damage by O(2) under carbon- or phosphate-limited conditions. The polypeptide is Uptake hydrogenase small subunit (hupS) (Alcaligenes hydrogenophilus).